A 454-amino-acid chain; its full sequence is Bifunctional protein GlmU (454 aa).

The interval 1–229 (MQRYAVVLAA…FDEIMGVNDR (229 aa)) is pyrophosphorylase. UDP-N-acetyl-alpha-D-glucosamine is bound by residues 8–11 (LAAG), K22, Q72, and 77–78 (GT). D102 contributes to the Mg(2+) binding site. G139, E154, and N227 together coordinate UDP-N-acetyl-alpha-D-glucosamine. N227 contacts Mg(2+). The tract at residues 230–250 (VALSKAEQAMRQRINEYHMRN) is linker. The tract at residues 251–454 (GVTLIDPSST…KPGYLNKNKE (204 aa)) is N-acetyltransferase. UDP-N-acetyl-alpha-D-glucosamine contacts are provided by R332 and K350. H362 acts as the Proton acceptor in catalysis. UDP-N-acetyl-alpha-D-glucosamine-binding residues include Y365 and N376. Acetyl-CoA-binding positions include 385–386 (NY), A422, and R439.

The protein in the N-terminal section; belongs to the N-acetylglucosamine-1-phosphate uridyltransferase family. This sequence in the C-terminal section; belongs to the transferase hexapeptide repeat family. As to quaternary structure, homotrimer. The cofactor is Mg(2+).

Its subcellular location is the cytoplasm. It catalyses the reaction alpha-D-glucosamine 1-phosphate + acetyl-CoA = N-acetyl-alpha-D-glucosamine 1-phosphate + CoA + H(+). It carries out the reaction N-acetyl-alpha-D-glucosamine 1-phosphate + UTP + H(+) = UDP-N-acetyl-alpha-D-glucosamine + diphosphate. It participates in nucleotide-sugar biosynthesis; UDP-N-acetyl-alpha-D-glucosamine biosynthesis; N-acetyl-alpha-D-glucosamine 1-phosphate from alpha-D-glucosamine 6-phosphate (route II): step 2/2. Its pathway is nucleotide-sugar biosynthesis; UDP-N-acetyl-alpha-D-glucosamine biosynthesis; UDP-N-acetyl-alpha-D-glucosamine from N-acetyl-alpha-D-glucosamine 1-phosphate: step 1/1. It functions in the pathway bacterial outer membrane biogenesis; LPS lipid A biosynthesis. Catalyzes the last two sequential reactions in the de novo biosynthetic pathway for UDP-N-acetylglucosamine (UDP-GlcNAc). The C-terminal domain catalyzes the transfer of acetyl group from acetyl coenzyme A to glucosamine-1-phosphate (GlcN-1-P) to produce N-acetylglucosamine-1-phosphate (GlcNAc-1-P), which is converted into UDP-GlcNAc by the transfer of uridine 5-monophosphate (from uridine 5-triphosphate), a reaction catalyzed by the N-terminal domain. This Staphylococcus carnosus (strain TM300) protein is Bifunctional protein GlmU.